We begin with the raw amino-acid sequence, 104 residues long: Large ribosomal subunit protein bL21 (104 aa).

This sequence belongs to the bacterial ribosomal protein bL21 family. Part of the 50S ribosomal subunit. Contacts protein L20.

This protein binds to 23S rRNA in the presence of protein L20. The chain is Large ribosomal subunit protein bL21 from Clostridium botulinum (strain 657 / Type Ba4).